We begin with the raw amino-acid sequence, 442 residues long: NADH-quinone oxidoreductase subunit D (442 aa).

This sequence belongs to the complex I 49 kDa subunit family. As to quaternary structure, NDH-1 is composed of 14 different subunits. Subunits NuoB, C, D, E, F, and G constitute the peripheral sector of the complex.

The protein resides in the cell membrane. It catalyses the reaction a quinone + NADH + 5 H(+)(in) = a quinol + NAD(+) + 4 H(+)(out). Its function is as follows. NDH-1 shuttles electrons from NADH, via FMN and iron-sulfur (Fe-S) centers, to quinones in the respiratory chain. The immediate electron acceptor for the enzyme in this species is believed to be a menaquinone. Couples the redox reaction to proton translocation (for every two electrons transferred, four hydrogen ions are translocated across the cytoplasmic membrane), and thus conserves the redox energy in a proton gradient. The sequence is that of NADH-quinone oxidoreductase subunit D from Mycolicibacterium vanbaalenii (strain DSM 7251 / JCM 13017 / BCRC 16820 / KCTC 9966 / NRRL B-24157 / PYR-1) (Mycobacterium vanbaalenii).